The primary structure comprises 360 residues: Protein Wnt-2 (360 aa).

The first 25 residues, 1–25, serve as a signal peptide directing secretion; sequence MNAPLGGIWPWLPLLLTWLTPEVSS. Intrachain disulfides connect C76–C87, C127–C135, C137–C157, C206–C220, C208–C215, C278–C309, C294–C304, C308–C348, C324–C339, C326–C336, and C331–C332. S212 is lipidated: O-palmitoleoyl serine; by PORCN. N-linked (GlcNAc...) asparagine glycosylation occurs at N295.

It belongs to the Wnt family. In terms of processing, palmitoleoylation is required for efficient binding to frizzled receptors. Depalmitoleoylation leads to Wnt signaling pathway inhibition.

Its subcellular location is the secreted. It localises to the extracellular space. The protein localises to the extracellular matrix. Functionally, ligand for members of the frizzled family of seven transmembrane receptors. Functions in the canonical Wnt signaling pathway that results in activation of transcription factors of the TCF/LEF family. Functions as a upstream regulator of FGF10 expression. Plays an important role in embryonic lung development. May contribute to embryonic brain development by regulating the proliferation of dopaminergic precursors and neurons. This Felis catus (Cat) protein is Protein Wnt-2 (WNT2).